Reading from the N-terminus, the 93-residue chain is UPF0175 protein AF_0100 (93 aa).

The protein belongs to the UPF0175 family.

This Archaeoglobus fulgidus (strain ATCC 49558 / DSM 4304 / JCM 9628 / NBRC 100126 / VC-16) protein is UPF0175 protein AF_0100.